The following is a 238-amino-acid chain: Large ribosomal subunit protein uL1 (238 aa).

The protein belongs to the universal ribosomal protein uL1 family. Part of the 50S ribosomal subunit.

In terms of biological role, binds directly to 23S rRNA. The L1 stalk is quite mobile in the ribosome, and is involved in E site tRNA release. Its function is as follows. Protein L1 is also a translational repressor protein, it controls the translation of the L11 operon by binding to its mRNA. The protein is Large ribosomal subunit protein uL1 of Nostoc sp. (strain PCC 7120 / SAG 25.82 / UTEX 2576).